The chain runs to 517 residues: Bifunctional purine biosynthesis protein PurH (517 aa).

The region spanning 1 to 145 is the MGS-like domain; it reads MSPLALVSVS…KNHADVAVLV (145 aa).

It belongs to the PurH family.

It carries out the reaction (6R)-10-formyltetrahydrofolate + 5-amino-1-(5-phospho-beta-D-ribosyl)imidazole-4-carboxamide = 5-formamido-1-(5-phospho-D-ribosyl)imidazole-4-carboxamide + (6S)-5,6,7,8-tetrahydrofolate. It catalyses the reaction IMP + H2O = 5-formamido-1-(5-phospho-D-ribosyl)imidazole-4-carboxamide. The protein operates within purine metabolism; IMP biosynthesis via de novo pathway; 5-formamido-1-(5-phospho-D-ribosyl)imidazole-4-carboxamide from 5-amino-1-(5-phospho-D-ribosyl)imidazole-4-carboxamide (10-formyl THF route): step 1/1. Its pathway is purine metabolism; IMP biosynthesis via de novo pathway; IMP from 5-formamido-1-(5-phospho-D-ribosyl)imidazole-4-carboxamide: step 1/1. This chain is Bifunctional purine biosynthesis protein PurH, found in Prochlorococcus marinus (strain MIT 9515).